The sequence spans 285 residues: 2,3,4,5-tetrahydropyridine-2,6-dicarboxylate N-succinyltransferase (285 aa).

Residues arginine 111 and aspartate 148 each coordinate substrate.

The protein belongs to the transferase hexapeptide repeat family. As to quaternary structure, homotrimer.

It localises to the cytoplasm. The catalysed reaction is (S)-2,3,4,5-tetrahydrodipicolinate + succinyl-CoA + H2O = (S)-2-succinylamino-6-oxoheptanedioate + CoA. The protein operates within amino-acid biosynthesis; L-lysine biosynthesis via DAP pathway; LL-2,6-diaminopimelate from (S)-tetrahydrodipicolinate (succinylase route): step 1/3. In Sinorhizobium medicae (strain WSM419) (Ensifer medicae), this protein is 2,3,4,5-tetrahydropyridine-2,6-dicarboxylate N-succinyltransferase.